Reading from the N-terminus, the 860-residue chain is Beta-glucosidase 1 (860 aa).

Positions Met1–Ala19 are cleaved as a signal peptide. 3 N-linked (GlcNAc...) asparagine glycosylation sites follow: Asn61, Asn211, and Asn252. Residue Asp280 is part of the active site. Asn315, Asn322, Asn354, Asn387, Asn442, Asn523, Asn542, Asn564, Asn658, Asn668, Asn690, and Asn712 each carry an N-linked (GlcNAc...) asparagine glycan.

The protein belongs to the glycosyl hydrolase 3 family.

The enzyme catalyses Hydrolysis of terminal, non-reducing beta-D-glucosyl residues with release of beta-D-glucose.. It participates in glycan metabolism; cellulose degradation. The chain is Beta-glucosidase 1 from Aspergillus aculeatus.